Consider the following 154-residue polypeptide: MAPDVPLRQLDLSLQFGQFPGVARHRAALPRRRVQRWISHALKTDAEITVRIVDAEEGQSLNRDYRRKDYATNVLTFDYTREPVVTADLVLCAPVVEREAREQGKTLEAHYAHLLVHATLHAQGYDHETNERDALEMEALEILLLASLRFANPY.

Positions 117, 121, and 127 each coordinate Zn(2+).

It belongs to the endoribonuclease YbeY family. It depends on Zn(2+) as a cofactor.

It is found in the cytoplasm. Functionally, single strand-specific metallo-endoribonuclease involved in late-stage 70S ribosome quality control and in maturation of the 3' terminus of the 16S rRNA. This chain is Endoribonuclease YbeY, found in Polaromonas sp. (strain JS666 / ATCC BAA-500).